The chain runs to 728 residues: Beta-porphyranase A (728 aa).

The signal sequence occupies residues 1–22 (MSYKYIFLLSAFTLGVPPGIYC). The substrate site is built by His53, Lys76, Trp78, Lys87, His114, and Asn151. The Proton donor role is filled by Glu152. Substrate contacts are provided by His235, Glu279, Ser326, and Trp331. Glu279 (nucleophile) is an active-site residue. Residues 599–701 (TLQNGTFSEG…AVSFDFNSTV (103 aa)) enclose the CBM-cenC domain.

It belongs to the glycosyl hydrolase 86 family.

The catalysed reaction is Hydrolysis of beta-D-galactopyranose-(1-&gt;4)-alpha-L-galactopyranose-6-sulfate linkages in porphyran.. In terms of biological role, cleaves the sulfated polysaccharide porphyran at the (1-&gt;4) linkages between beta-D-galactopyranose and alpha-L-galactopyranose-6-sulfate, forming mostly the disaccharide alpha-L-galactopyranose-6-sulfate-(1-&gt;3)-beta-D-galactose. Some longer oligosaccharides of even number of residues are also observed. Inactive on the non-sulfated agarose portion of the porphyran backbone. Can also use methylated galactoses. The chain is Beta-porphyranase A from Phocaeicola plebeius (strain DSM 17135 / JCM 12973 / CCUG 54634 / M2) (Bacteroides plebeius).